A 394-amino-acid polypeptide reads, in one-letter code: Acryloyl-CoA reductase (NADH) (394 aa).

FAD contacts are provided by residues Phe135 to Ser144 and Phe170 to Ser172. Ser144 serves as a coordination point for substrate. Substrate is bound at residue Asp254–Arg257. FAD-binding positions include Arg282, Gln293, and Gln350 to Gly354. Catalysis depends on Glu377, which acts as the Proton acceptor. Gly378 is a substrate binding site. Thr379–Glu381 serves as a coordination point for FAD.

In terms of assembly, heterohexadecamer; tetramer of tetramers. Each tetramer is composed of 2 alpha (AcrC), a beta (AcrA) and a gamma (AcrB) subunit. FAD serves as cofactor.

Its subcellular location is the cytoplasm. It catalyses the reaction propanoyl-CoA + NAD(+) = acryloyl-CoA + NADH + H(+). Its function is as follows. Probable catalytic subunit of the acryloyl-CoA reductase complex involved in the pathway of L-alanine fermentation. Catalyzes the irreversible NADH-dependent formation of propionyl-CoA from acryloyl-CoA. It can also use 3-buten-2-one as substrate. This Anaerotignum propionicum (Clostridium propionicum) protein is Acryloyl-CoA reductase (NADH) (acrC).